Here is a 612-residue protein sequence, read N- to C-terminus: 2-isopropylmalate synthase B (612 aa).

The region spanning 71–344 is the Pyruvate carboxyltransferase domain; the sequence is VRIFDTTLRD…YTGINTQHIL (274 aa). Residues D80, H277, and N313 each coordinate a divalent metal cation.

It belongs to the alpha-IPM synthase/homocitrate synthase family. LeuA type 1 subfamily. In terms of assembly, homodimer. It depends on a divalent metal cation as a cofactor.

It catalyses the reaction 3-methyl-2-oxobutanoate + acetyl-CoA + H2O = (2S)-2-isopropylmalate + CoA + H(+). Its pathway is amino-acid biosynthesis; L-leucine biosynthesis; L-leucine from 3-methyl-2-oxobutanoate: step 1/4. Its function is as follows. Catalyzes the condensation of the acetyl group of acetyl-CoA with 3-methyl-2-oxobutanoate (2-oxoisovalerate) to form 3-carboxy-3-hydroxy-4-methylpentanoate (2-isopropylmalate). The sequence is that of 2-isopropylmalate synthase B (IPMSB) from Solanum pennellii (Tomato).